Consider the following 89-residue polypeptide: Small ribosomal subunit protein uS15 (89 aa).

It belongs to the universal ribosomal protein uS15 family. In terms of assembly, part of the 30S ribosomal subunit. Forms a bridge to the 50S subunit in the 70S ribosome, contacting the 23S rRNA.

In terms of biological role, one of the primary rRNA binding proteins, it binds directly to 16S rRNA where it helps nucleate assembly of the platform of the 30S subunit by binding and bridging several RNA helices of the 16S rRNA. Forms an intersubunit bridge (bridge B4) with the 23S rRNA of the 50S subunit in the ribosome. In Herminiimonas arsenicoxydans, this protein is Small ribosomal subunit protein uS15.